We begin with the raw amino-acid sequence, 35 residues long: MQSYNVFPALVIITTLVVPFMAAAALLFIIERDPS.

Residues 10–30 (LVIITTLVVPFMAAAALLFII) traverse the membrane as a helical segment.

As to quaternary structure, the G.violaceus PSI reaction center is composed of one copy each of PsaA,B,C,D,E,F,L,M and Z, and forms trimeric complexes.

It is found in the cell inner membrane. The chain is Photosystem I reaction center subunit Z (psaZ) from Gloeobacter violaceus (strain ATCC 29082 / PCC 7421).